The primary structure comprises 186 residues: Ribosome-recycling factor (186 aa).

This sequence belongs to the RRF family.

It localises to the cytoplasm. Responsible for the release of ribosomes from messenger RNA at the termination of protein biosynthesis. May increase the efficiency of translation by recycling ribosomes from one round of translation to another. The sequence is that of Ribosome-recycling factor from Allorhizobium ampelinum (strain ATCC BAA-846 / DSM 112012 / S4) (Agrobacterium vitis (strain S4)).